The following is a 108-amino-acid chain: Glutaredoxin-like protein YDR286C homolog (108 aa).

Cys22 and Cys25 are disulfide-bonded.

It belongs to the glutaredoxin family. YDR286C subfamily.

In Dictyostelium discoideum (Social amoeba), this protein is Glutaredoxin-like protein YDR286C homolog.